We begin with the raw amino-acid sequence, 427 residues long: Synaptotagmin-A (427 aa).

Residues 1-57 (MKLTEAYHDALAALPATPPLPTAVANATEAAAGSEEGKQDGFSKVKVKEKFMNELNK) are Vesicular-facing. Asn26 is a glycosylation site (N-linked (GlcNAc...) asparagine). A helical membrane pass occupies residues 58 to 84 (IPLPPWALVAIAIVAIILGLTCCFCIC). The Cytoplasmic segment spans residues 85 to 427 (KKCLLKKKNK…EVDATLGMKK (343 aa)). Residues 96 to 145 (KGKEKGGKNAMTMKDVKEMGKSGKEQALKDEDEDAETGLTTDGKEEEKED) are disordered. Positions 109 to 124 (KDVKEMGKSGKEQALK) are enriched in basic and acidic residues. The interval 141-387 (EEKEDEKLGK…AIGKVFVGYN (247 aa)) is phospholipid binding. 2 C2 domains span residues 147 to 266 (KLGK…EEWR) and 278 to 411 (KLGD…AQWH). Ca(2+)-binding residues include Leu177, Asp178, Asp184, Asp236, Phe237, Asp238, Ser241, Lys242, Asp244, Asp309, Asp315, Asp369, Asp371, and Asp377.

This sequence belongs to the synaptotagmin family. In terms of assembly, homodimer or homotrimer (possible). It depends on Ca(2+) as a cofactor. As to expression, forebrain, cerebellum and neuroendocrine cells.

It localises to the cytoplasmic vesicle. The protein localises to the secretory vesicle. Its subcellular location is the synaptic vesicle membrane. It is found in the synapse. In terms of biological role, may have a regulatory role in the membrane interactions during trafficking of synaptic vesicles at the active zone of the synapse. It binds acidic phospholipids with a specificity that requires the presence of both an acidic head group and a diacyl backbone. In Diplobatis ommata (Ocellated electric ray), this protein is Synaptotagmin-A (P65-A).